Consider the following 67-residue polypeptide: MKVRLDPSRCVGHAQCYAVDPDLFPIDDSGNSILAEHEVRPEDMQLTRDGVAACPEMALILEEDDAD.

Positions 10, 11, 15, 16, and 54 each coordinate [3Fe-4S] cluster.

In terms of assembly, interacts with the cytochrome P450 143 with high affinity (Kd=84 nM). [3Fe-4S] cluster is required as a cofactor.

Its function is as follows. Ferredoxin that is the redox partner of cytochrome CYP143, a cytochrome P450 encoded by an adjacent gene. The chain is Ferredoxin FdxE from Mycobacterium tuberculosis (strain ATCC 25618 / H37Rv).